We begin with the raw amino-acid sequence, 297 residues long: Homoserine kinase (297 aa).

84–94 (PPARGLGSSAT) contributes to the ATP binding site.

Belongs to the GHMP kinase family. Homoserine kinase subfamily.

The protein localises to the cytoplasm. The enzyme catalyses L-homoserine + ATP = O-phospho-L-homoserine + ADP + H(+). Its pathway is amino-acid biosynthesis; L-threonine biosynthesis; L-threonine from L-aspartate: step 4/5. Its function is as follows. Catalyzes the ATP-dependent phosphorylation of L-homoserine to L-homoserine phosphate. The sequence is that of Homoserine kinase (thrB) from Aquifex aeolicus (strain VF5).